The chain runs to 411 residues: Phospholipase A1-II 6 (411 aa).

Ser-226 (acyl-ester intermediate) is an active-site residue. Catalysis depends on charge relay system residues Ser-226, Asp-296, and His-334.

This sequence belongs to the AB hydrolase superfamily. Lipase family.

The protein resides in the cytoplasm. Functionally, acylhydrolase that catalyzes the hydrolysis of phospholipids at the sn-1 position. The polypeptide is Phospholipase A1-II 6 (Oryza sativa subsp. japonica (Rice)).